The chain runs to 1507 residues: Paired amphipathic helix protein sin-3 (1507 aa).

Disordered stretches follow at residues 1–26 (MYNP…TNNA), 228–286 (PLAL…PPRV), 397–450 (ELGS…MMEE), 543–569 (VDDV…DSSK), and 1349–1434 (IPRE…MDHL). Residues 16 to 26 (DQSQQQPTNNA) are compositionally biased toward polar residues. A compositionally biased stretch (basic residues) spans 270–279 (RQNRPGRRKK). Positions 282–352 (GPPRVDEALA…LGFNTFLPTG (71 aa)) constitute a PAH domain. The segment covering 427 to 438 (DGIDDEDDEESG) has biased composition (acidic residues). 2 stretches are compositionally biased toward basic and acidic residues: residues 439 to 450 (IEDKNNEEMMEE) and 555 to 568 (EIKK…KDSS). Composition is skewed to acidic residues over residues 1354–1365 (KDDDDDDDEEGN), 1373–1382 (NVKDEDDGGD), and 1389–1421 (PDDD…DEPE).

Component of the SIN3S complex, which contains at least sin-3, hda-1, athp-1 and mrg-1. Interacts with ztf-11; the interaction is weak. Interacts with cfp-1. As to expression, expressed in all ray structural cells including ray 6, 7, 8 and 9 of the male tail. Also expressed in the inner labial neurons, socket cells, the cephalic neurons in the head and the ventral nerve cord.

The protein resides in the nucleus. In terms of biological role, probable transcriptional repressor required for the deposition of dimethylated 'Lys-9' of histone H3 (H3K9me2) on asynapsed chromosome pairs (both autosomes and sex chromosomes) during meiosis, but this does not seem to solely affect the transcriptional status. Plays a role in ray fusion and patterning in the male tail, and this may be through activity of the histone deacetylase complex (HDAC). This Caenorhabditis elegans protein is Paired amphipathic helix protein sin-3.